The chain runs to 184 residues: GTP-dependent dephospho-CoA kinase (184 aa).

The GTP site is built by D33, V34, D52, K54, and E103.

The protein belongs to the GTP-dependent DPCK family.

The catalysed reaction is 3'-dephospho-CoA + GTP = GDP + CoA + H(+). Its pathway is cofactor biosynthesis; coenzyme A biosynthesis. In terms of biological role, catalyzes the GTP-dependent phosphorylation of the 3'-hydroxyl group of dephosphocoenzyme A to form coenzyme A (CoA). The chain is GTP-dependent dephospho-CoA kinase from Ignicoccus hospitalis (strain KIN4/I / DSM 18386 / JCM 14125).